We begin with the raw amino-acid sequence, 278 residues long: Secoisolariciresinol dehydrogenase (278 aa).

NAD(+) is bound by residues 23 to 28, Asp47, Val73, and Asn99; that span reads GGAGGI. Ser104 and Ser164 together coordinate substrate. Tyr167 serves as the catalytic Proton donor/acceptor. The NAD(+) site is built by Lys171 and Val200.

It belongs to the short-chain dehydrogenases/reductases (SDR) family. Homotetramer. As to expression, mostly expressed in stems and rhizomes, and, to a lower extent, in leaves.

It catalyses the reaction (-)-secoisolariciresinol + 2 NAD(+) = (-)-matairesinol + 2 NADH + 2 H(+). The protein operates within aromatic compound metabolism; phenylpropanoid biosynthesis. Oxidoreductase involved in lignan biosynthesis. Also involved in the biosynthesis of etoposide, a chemotherapeutic compound of the topoisomerase inhibitor family. Catalyzes the stereospecific conversion of (-)-secoisolariciresinol to (-)-matairesinol via a lactol intermediate. This Sinopodophyllum hexandrum (Himalayan may apple) protein is Secoisolariciresinol dehydrogenase.